The following is a 477-amino-acid chain: Calcium/calmodulin-dependent protein kinase type 1G (477 aa).

The Protein kinase domain occupies 23 to 277 (FIFMEVLGSG…CEKALRHPWI (255 aa)). Residues 29–37 (LGSGAFSEV) and K52 each bind ATP. The active-site Proton acceptor is D143. Residues 277 to 317 (IDGNTALHRDIYPSVSLQIQKNFAKSKWRQAFNAAAVVHHM) form an autoinhibitory domain region. The tract at residues 297–318 (KNFAKSKWRQAFNAAAVVHHMR) is calmodulin-binding. A disordered region spans residues 326–388 (SPSVRQEVEN…SRPSAPSGGR (63 aa)). Low complexity predominate over residues 376 to 388 (SHSSRPSAPSGGR).

It belongs to the protein kinase superfamily. CAMK Ser/Thr protein kinase family. CaMK subfamily. May be prenylated on Cys-474. As to expression, highly expressed in brain, in neuronal cell bodies of the central nucleus of amygdala and ventromedial hypothalamic nucleus. Also detected in heart, testis, and kidney.

Its subcellular location is the cytoplasm. It localises to the golgi apparatus membrane. The protein resides in the cell membrane. The catalysed reaction is L-seryl-[protein] + ATP = O-phospho-L-seryl-[protein] + ADP + H(+). It carries out the reaction L-threonyl-[protein] + ATP = O-phospho-L-threonyl-[protein] + ADP + H(+). Activated by Ca(2+)/calmodulin. Binding of calmodulin is thought to result in a conformational change and leads to activation through phosphorylation by CAMKK1. Its function is as follows. Calcium/calmodulin-dependent protein kinase belonging to a proposed calcium-triggered signaling cascade. In vitro phosphorylates transcription factor CREB1. This Mus musculus (Mouse) protein is Calcium/calmodulin-dependent protein kinase type 1G (Camk1g).